Consider the following 773-residue polypeptide: MAECGASGSGSSGDSLDKSITLPPDEIFRNLENAKRFAIDIGGSLTKLAYYSTVQHKVAKVRSFDHSGKDTEREHEPPYEISVQEEITARLHFIKFENTYIEACLDFIKDHLVNTETKVIQATGGGAYKFKDLIEEKLRLKVDKEDVMTCLIKGCNFVLKNIPHEAFVYQKDSDPEFRFQTNHPHIFPYLLVNIGSGVSIVKVETEDRFEWVGGSSIGGGTFWGLGALLTKTKKFDELLHLASRGQHSNVDMLVRDVYGGAHQTLGLSGNLIASSFGKSATADQEFSKEDMAKSLLHMISNDIGQLACLHARLHSLDRVYFGGFFIRGHPVTMRTITYSINFFSKGEVQALFLRHEGYLGAIGAFLKGAEQDNPNQYSWGENYAGSSGLMSASPELGPAQRARSGTFDLLEMDRLERPLVDLPLLLDPPSYVPDTVDLTDDALARKYWLTCFEEALDGVVKRAVASQPDSVDAAERAEKFRQKYWNKLQTLRQQPFAYGTLTVRSLLDTREHCLNEFNFPDPYSKVKQRENGVALRCFPGVVRSLDALGWEERQLALVKGLLAGNVFDWGAKAVSAVLESDPYFGFEEAKRKLQERPWLVDSYSEWLQRLKGPPHKCALIFADNSGIDIILGVFPFVRELLLRGTEVILACNSGPALNDVTHSESLIVAERIAGMDPVVHSALQEERLLLVQTGSSSPCLDLSRLDKGLAALVRERGADLVVIEGMGRAVHTNYHAALRCESLKLAVIKNAWLAERLGGRLFSVIFKYEVPAE.

The residue at position 2 (alanine 2) is an N-acetylalanine. Residues 2–402 (AECGASGSGS…SPELGPAQRA (401 aa)) are pantothenate kinase. 2 residues coordinate acetyl-CoA: serine 196 and serine 199. The residue at position 320 (tyrosine 320) is a 3'-nitrotyrosine. 2 positions are modified to phosphoserine: serine 393 and serine 404. The tract at residues 403–773 (RSGTFDLLEM…VIFKYEVPAE (371 aa)) is 4'-phosphopantetheine phosphatase. Residue threonine 406 is modified to Phosphothreonine. The Mn(2+) site is built by aspartate 623, asparagine 624, and aspartate 659. Positions 724–728 (EGMGR) match the Subfamily II EGMGR motif motif.

The protein in the N-terminal section; belongs to the type II pantothenate kinase family. This sequence in the C-terminal section; belongs to the damage-control phosphatase family. Phosphopantetheine phosphatase II subfamily. Homodimer. Interacts with PKM. Requires Mn(2+) as cofactor. The cofactor is Ni(2+). In terms of tissue distribution, widely expressed with high expression in the muscle. Expressed in the retina and lens epithelium, mainly in ganglion cell layer, outer plexiform layer and retinal pigment layer (at protein level).

It localises to the cytoplasm. The enzyme catalyses (R)-4'-phosphopantetheine + H2O = (R)-pantetheine + phosphate. The catalysed reaction is (R)-4'-phosphopantetheine sulfonate + H2O = (R)-pantetheine sulfonate + phosphate. It carries out the reaction (R)-4'-phospho-S-sulfopantetheine + H2O = (R)-S-sulfopantetheine + phosphate. Its activity is regulated as follows. Activity is strongly promoted by Co(2+), Ni(2+), Mg(2+) and Mn(2+). Activity is inhibited by EDTA. Phosphatase which shows a preference for 4'-phosphopantetheine and its oxidatively damaged forms (sulfonate or S-sulfonate), providing strong indirect evidence that the phosphatase activity pre-empts damage in the coenzyme A (CoA) pathway. Hydrolyzing excess 4'-phosphopantetheine could constitute a directed overflow mechanism to prevent its oxidation to the S-sulfonate, sulfonate, or other forms. Hydrolyzing 4'-phosphopantetheine sulfonate or S-sulfonate would forestall their conversion to inactive forms of CoA and acyl carrier protein. May play a role in the physiological regulation of CoA intracellular levels. This Homo sapiens (Human) protein is 4'-phosphopantetheine phosphatase.